Here is a 558-residue protein sequence, read N- to C-terminus: Hepatocyte nuclear factor 1-beta (558 aa).

Positions 1 to 31 (MVSKLTSLQQELLSALLSSGVTKEVLIQALE) are dimerization. In terms of domain architecture, HNF-p1 spans 1 to 32 (MVSKLTSLQQELLSALLSSGVTKEVLIQALEE). Residues Ser49, Ser52, Ser75, and Ser80 each carry the phosphoserine modification. The segment at 66 to 85 (TNGHAKGRLSGDEGSEDGDD) is disordered. The 96-residue stretch at 93-188 (KELQALNTEE…ILRQFNQTVQ (96 aa)) folds into the POU-specific atypical domain. The segment at residues 231–311 (MRRNRFKWGP…NRRKEEAFRQ (81 aa)) is a DNA-binding region (homeobox; HNF1-type). A disordered region spans residues 323–348 (THNLNPLLTHGSPHHQPSSSPPNKMS).

Belongs to the HNF1 homeobox family. As to quaternary structure, binds DNA as a dimer. Can form homodimer or heterodimer with HNF1-alpha. Interacts (via HNF-p1 domain) with PCBD1; the interaction increases its transactivation activity.

Its subcellular location is the nucleus. In terms of biological role, transcription factor that binds to the inverted palindrome 5'-GTTAATNATTAAC-3'. Binds to the FPC element in the cAMP regulatory unit of the PLAU gene. Transcriptional activity is increased by coactivator PCBD1. The protein is Hepatocyte nuclear factor 1-beta (Hnf1b) of Mus musculus (Mouse).